An 86-amino-acid polypeptide reads, in one-letter code: MFTLKKPLLLIVLLGIISLSLCEQERNADEDEESEIKRGIFPKIIGKGIKTGIVNGIKSLVKGVGMKVFKAGLSNIGNTGCNEDEC.

The first 22 residues, 1–22 (MFTLKKPLLLIVLLGIISLSLC), serve as a signal peptide directing secretion. The propeptide occupies 23–36 (EQERNADEDEESEI). C81 and C86 form a disulfide bridge.

Expressed by the skin glands.

Its subcellular location is the secreted. In terms of biological role, antimicrobial peptide. This chain is Palustrin-3b, found in Odorrana versabilis (Chinese bamboo leaf odorous frog).